We begin with the raw amino-acid sequence, 665 residues long: Fructose-1,6-bisphosphatase class 3 (665 aa).

The protein belongs to the FBPase class 3 family. It depends on Mn(2+) as a cofactor.

The catalysed reaction is beta-D-fructose 1,6-bisphosphate + H2O = beta-D-fructose 6-phosphate + phosphate. It functions in the pathway carbohydrate biosynthesis; gluconeogenesis. The protein is Fructose-1,6-bisphosphatase class 3 of Alkaliphilus metalliredigens (strain QYMF).